The following is a 484-amino-acid chain: Aspartyl/glutamyl-tRNA(Asn/Gln) amidotransferase subunit B (484 aa).

This sequence belongs to the GatB/GatE family. GatB subfamily. Heterotrimer of A, B and C subunits.

It carries out the reaction L-glutamyl-tRNA(Gln) + L-glutamine + ATP + H2O = L-glutaminyl-tRNA(Gln) + L-glutamate + ADP + phosphate + H(+). The catalysed reaction is L-aspartyl-tRNA(Asn) + L-glutamine + ATP + H2O = L-asparaginyl-tRNA(Asn) + L-glutamate + ADP + phosphate + 2 H(+). In terms of biological role, allows the formation of correctly charged Asn-tRNA(Asn) or Gln-tRNA(Gln) through the transamidation of misacylated Asp-tRNA(Asn) or Glu-tRNA(Gln) in organisms which lack either or both of asparaginyl-tRNA or glutaminyl-tRNA synthetases. The reaction takes place in the presence of glutamine and ATP through an activated phospho-Asp-tRNA(Asn) or phospho-Glu-tRNA(Gln). This Dechloromonas aromatica (strain RCB) protein is Aspartyl/glutamyl-tRNA(Asn/Gln) amidotransferase subunit B.